The following is a 277-amino-acid chain: Venom serine protease (277 aa).

The N-terminal stretch at 1 to 19 (MNCGKIILLFITIIGVAKS) is a signal peptide. Residues 34 to 269 (IVNGVETEIN…FMEFIHNATI (236 aa)) enclose the Peptidase S1 domain. A disulfide bridge links Cys-60 with Cys-76. His-75 (charge relay system) is an active-site residue. N-linked (GlcNAc...) asparagine glycosylation is found at Asn-84 and Asn-104. The active-site Charge relay system is the Asp-126. N-linked (GlcNAc...) asparagine glycans are attached at residues Asn-155 and Asn-158. 2 disulfide bridges follow: Cys-192–Cys-207 and Cys-216–Cys-246. N-linked (GlcNAc...) asparagine glycosylation occurs at Asn-218. Ser-220 (charge relay system) is an active-site residue. A glycan (N-linked (GlcNAc...) asparagine) is linked at Asn-266.

This sequence belongs to the peptidase S1 family. In terms of tissue distribution, expressed by the venom duct.

It localises to the secreted. This is Venom serine protease from Polistes dominula (European paper wasp).